The following is a 295-amino-acid chain: HTH-type transcriptional regulator TdfR (295 aa).

An HTH lysR-type domain is found at Met1–Thr58. The segment at residues Val18–His37 is a DNA-binding region (H-T-H motif).

The protein belongs to the LysR transcriptional regulatory family.

It is found in the cytoplasm. Its function is as follows. Involved in the regulation of 3-chlorocatechol degradation. Transcriptional regulator of tfdB expression. Acts as a repressor in the absence of its effector (either 2-cis-chlorodiene lactone or chloromaleylacetate) but acts as an activator when its effector is present. This chain is HTH-type transcriptional regulator TdfR (tfdR), found in Cupriavidus pinatubonensis (strain JMP 134 / LMG 1197) (Cupriavidus necator (strain JMP 134)).